A 492-amino-acid polypeptide reads, in one-letter code: Alpha-amylase-related protein (492 aa).

The first 18 residues, 1–18, serve as a signal peptide directing secretion; it reads MRLSLSVLLCLGLALTLA. Q19 is modified (pyrrolidone carboxylic acid). A disulfide bond links C46 and C102. Ca(2+) is bound by residues N116, Q167, and D176. C155 and C169 are oxidised to a cystine. R204 serves as a coordination point for chloride. Catalysis depends on D206, which acts as the Nucleophile. Residue H210 coordinates Ca(2+). The active-site Proton donor is the E243. Chloride contacts are provided by N306 and R341. Intrachain disulfides connect C374-C380, C416-C439, and C446-C458.

It belongs to the glycosyl hydrolase 13 family. In terms of assembly, monomer. It depends on Ca(2+) as a cofactor. Requires chloride as cofactor.

It is found in the secreted. It carries out the reaction Endohydrolysis of (1-&gt;4)-alpha-D-glucosidic linkages in polysaccharides containing three or more (1-&gt;4)-alpha-linked D-glucose units.. The protein is Alpha-amylase-related protein (Amyrel) of Drosophila willistoni (Fruit fly).